An 80-amino-acid polypeptide reads, in one-letter code: Conotoxin Bu3 (80 aa).

An N-terminal signal peptide occupies residues Met1–Ala22. Positions Asp23 to Arg51 are excised as a propeptide. Intrachain disulfides connect Cys53-Cys69, Cys60-Cys72, and Cys68-Cys79.

Belongs to the conotoxin O1 superfamily. In terms of tissue distribution, expressed by the venom duct.

It localises to the secreted. The protein is Conotoxin Bu3 of Conus bullatus (Bubble cone).